A 468-amino-acid polypeptide reads, in one-letter code: ERO1-like protein alpha (468 aa).

The signal sequence occupies residues 1–23 (MGHRWGFLIVFLGAVGLLGSGYG). 8 disulfides stabilise this stretch: Cys35–Cys48, Cys37–Cys46, Cys85–Cys391, Cys94–Cys99, Cys94–Cys131, Cys99–Cys104, Cys208–Cys241, and Cys394–Cys397. 3 positions are modified to phosphoserine: Ser106, Ser143, and Ser145. FAD contacts are provided by Arg187, Thr189, and Trp200. FAD contacts are provided by Ser252 and His255. Asn280 is a glycosylation site (N-linked (GlcNAc...) asparagine). The FAD site is built by Arg287 and Arg300. The N-linked (GlcNAc...) asparagine glycan is linked to Asn384.

This sequence belongs to the EROs family. Predominantly monomer. May function both as a monomer and a homodimer. Interacts with PDILT. Interacts with ERP44; the interaction results in retention of ERO1A in the endoplasmic reticulum. The cofactor is FAD. In terms of processing, the Cys-94/Cys-99 and Cys-394/Cys-397 disulfide bonds constitute the redox-active center. The Cys-94/Cys-99 disulfide bond may accept electron from P4HB and funnel them to the active site disulfide Cys-394/Cys-397. The regulatory Cys-99/Cys-104 disulfide bond stabilizes the other regulatory bond Cys-94/Cys-131. Phosphorylated on Ser-145 by FAM20C in the Golgi which increases its enzymatic activity. Phosphorylation is induced by lactation. It is also induced by hypoxia and reductive stress.

It localises to the endoplasmic reticulum membrane. It is found in the golgi apparatus lumen. The protein localises to the secreted. Its subcellular location is the cell projection. The protein resides in the dendrite. Its activity is regulated as follows. Enzyme activity is tightly regulated to prevent the accumulation of reactive oxygen species in the endoplasmic reticulum. Reversibly down-regulated by the formation of disulfide bonds between the active site Cys-94 and Cys-131, and between Cys-99 and Cys-104. Glutathione may be required to regulate its activity in the endoplasmic reticulum. In terms of biological role, oxidoreductase involved in disulfide bond formation in the endoplasmic reticulum. Efficiently reoxidizes P4HB/PDI, the enzyme catalyzing protein disulfide formation, in order to allow P4HB to sustain additional rounds of disulfide formation. Following P4HB reoxidation, passes its electrons to molecular oxygen via FAD, leading to the production of reactive oxygen species (ROS) in the cell. Required for the proper folding of immunoglobulins. Plays an important role in ER stress-induced, CHOP-dependent apoptosis by activating the inositol 1,4,5-trisphosphate receptor IP3R1. The protein is ERO1-like protein alpha of Sus scrofa (Pig).